Here is a 775-residue protein sequence, read N- to C-terminus: Transcription activator of gluconeogenesis HCBG_00867 (775 aa).

The interval 1 to 70 (MTASTQNGSP…NAKDPLRPRR (70 aa)) is disordered. Composition is skewed to polar residues over residues 21-41 (NQES…QSPA) and 48-60 (TAES…STAA). Positions 77-105 (CFACQRAHLTCGDERPCQRCIKRGLQDAC) form a DNA-binding region, zn(2)-C6 fungal-type. Disordered stretches follow at residues 179 to 248 (TQAK…PFGA), 286 to 351 (GAGD…NIYN), 556 to 592 (NLNV…AGGG), and 649 to 725 (QGKE…SPKQ). Over residues 195–217 (MQDTSINPSAFQAPSPTSTPNFD) the composition is skewed to polar residues. A compositionally biased stretch (low complexity) spans 218-229 (LSSNPPNRNLSS). Polar residues-rich tracts occupy residues 230 to 244 (AMTQ…QTQD), 292 to 323 (PSDS…TQSP), 334 to 351 (WNPS…NIYN), and 557 to 576 (LNVN…TPRN). Over residues 657-668 (GSDGKGGGGGGD) the composition is skewed to gly residues. The span at 669–713 (VAATAATTSTSTSNGANSSGHANANRNNTNPKNSSPPSSSSAAAA) shows a compositional bias: low complexity.

It belongs to the ERT1/acuK family.

It localises to the nucleus. Transcription factor which regulates nonfermentable carbon utilization. Activator of gluconeogenetic genes. This is Transcription activator of gluconeogenesis HCBG_00867 from Ajellomyces capsulatus (strain G186AR / H82 / ATCC MYA-2454 / RMSCC 2432) (Darling's disease fungus).